A 355-amino-acid polypeptide reads, in one-letter code: UDP-N-acetylglucosamine--N-acetylmuramyl-(pentapeptide) pyrophosphoryl-undecaprenol N-acetylglucosamine transferase (355 aa).

UDP-N-acetyl-alpha-D-glucosamine is bound by residues Thr-15–Gly-17, Asn-127, Arg-163, Ser-191, Ile-244, Ala-263–Glu-268, and Gln-288.

This sequence belongs to the glycosyltransferase 28 family. MurG subfamily.

The protein localises to the cell inner membrane. The enzyme catalyses di-trans,octa-cis-undecaprenyl diphospho-N-acetyl-alpha-D-muramoyl-L-alanyl-D-glutamyl-meso-2,6-diaminopimeloyl-D-alanyl-D-alanine + UDP-N-acetyl-alpha-D-glucosamine = di-trans,octa-cis-undecaprenyl diphospho-[N-acetyl-alpha-D-glucosaminyl-(1-&gt;4)]-N-acetyl-alpha-D-muramoyl-L-alanyl-D-glutamyl-meso-2,6-diaminopimeloyl-D-alanyl-D-alanine + UDP + H(+). Its pathway is cell wall biogenesis; peptidoglycan biosynthesis. Its function is as follows. Cell wall formation. Catalyzes the transfer of a GlcNAc subunit on undecaprenyl-pyrophosphoryl-MurNAc-pentapeptide (lipid intermediate I) to form undecaprenyl-pyrophosphoryl-MurNAc-(pentapeptide)GlcNAc (lipid intermediate II). This chain is UDP-N-acetylglucosamine--N-acetylmuramyl-(pentapeptide) pyrophosphoryl-undecaprenol N-acetylglucosamine transferase, found in Escherichia coli (strain 55989 / EAEC).